The following is a 238-amino-acid chain: MAVEGGMKCVKFLLYVLLLAFCACAVGLIAIGVAVQVVLKQAITHETTAGSLLPVVIIAVGAFLFLVAFVGCCGACKENYCLMITFAIFLSLIMLVEVAVAIAGYVFRDQVKSEFSKSFQKQMQNYLTDNKTATILDKLQKENKCCGASNYTDWERIPGMAKDRVPDSCCINITVGCGNDFKESTIHTQGCVETIAAWLRKNVLLVAGAALGIAFVEVLGIIFSCCLVKSIRSGYEVM.

Residues 2–11 (AVEGGMKCVK) lie on the Cytoplasmic side of the membrane. The helical transmembrane segment at 12 to 32 (FLLYVLLLAFCACAVGLIAIG) threads the bilayer. At 33–51 (VAVQVVLKQAITHETTAGS) the chain is on the extracellular side. Residues 52 to 72 (LLPVVIIAVGAFLFLVAFVGC) traverse the membrane as a helical segment. Over 73–81 (CGACKENYC) the chain is Cytoplasmic. The chain crosses the membrane as a helical span at residues 82-102 (LMITFAIFLSLIMLVEVAVAI). Over 103–203 (AGYVFRDQVK…TIAAWLRKNV (101 aa)) the chain is Extracellular. 3 N-linked (GlcNAc...) asparagine glycosylation sites follow: N130, N150, and N172. The chain crosses the membrane as a helical span at residues 204-224 (LLVAGAALGIAFVEVLGIIFS). At 225 to 238 (CCLVKSIRSGYEVM) the chain is on the cytoplasmic side. The Lysosomal targeting motif motif lies at 234–238 (GYEVM).

Belongs to the tetraspanin (TM4SF) family. In terms of assembly, interacts with TIMP1 and ITGB1 and recruits TIMP1 to ITGB1. Interacts with CD9. Identified in a complex with CD9 and ITGB3. Interacts with PMEL. Interacts with KDR/VEGFR2; identified in a complex with ITGB1 and KDR/VEGFR2 and is required to recruit KDR to ITGB1 complexes. Interacts with SYT7. Post-translationally, palmitoylated at a low, basal level in unstimulated platelets. The level of palmitoylation increases when platelets are activated by thrombin (in vitro). Detected in mast cells and platelets (at protein level).

The protein localises to the cell membrane. Its subcellular location is the lysosome membrane. It localises to the late endosome membrane. It is found in the endosome. The protein resides in the multivesicular body. The protein localises to the melanosome. Its subcellular location is the secreted. It localises to the extracellular exosome. It is found in the cell surface. In terms of biological role, functions as a cell surface receptor for TIMP1 and plays a role in the activation of cellular signaling cascades. Plays a role in the activation of ITGB1 and integrin signaling, leading to the activation of AKT, FAK/PTK2 and MAP kinases. Promotes cell survival, reorganization of the actin cytoskeleton, cell adhesion, spreading and migration, via its role in the activation of AKT and FAK/PTK2. Plays a role in VEGFA signaling via its role in regulating the internalization of KDR/VEGFR2. Plays a role in intracellular vesicular transport processes, and is required for normal trafficking of the PMEL luminal domain that is essential for the development and maturation of melanocytes. Plays a role in the adhesion of leukocytes onto endothelial cells via its role in the regulation of SELP trafficking. May play a role in mast cell degranulation in response to Ms4a2/FceRI stimulation, but not in mast cell degranulation in response to other stimuli. This Rattus norvegicus (Rat) protein is CD63 antigen (Cd63).